Reading from the N-terminus, the 354-residue chain is Holliday junction branch migration complex subunit RuvB (354 aa).

Residues 5–197 form a large ATPase domain (RuvB-L) region; that stretch reads TDDFSAADLP…FGIVARLEFY (193 aa). ATP is bound by residues Leu-36, Arg-37, Gly-78, Lys-81, Thr-82, Thr-83, 144-146, Arg-187, Tyr-197, and Arg-234; that span reads EDY. A Mg(2+)-binding site is contributed by Thr-82. A small ATPAse domain (RuvB-S) region spans residues 198–268; it reads TAEELGRIVR…IANKALAMLD (71 aa). A head domain (RuvB-H) region spans residues 271–354; it reads PQGFDVMDRK…PPVSGNDMFT (84 aa). 3 residues coordinate DNA: Arg-307, Arg-326, and Arg-331.

The protein belongs to the RuvB family. Homohexamer. Forms an RuvA(8)-RuvB(12)-Holliday junction (HJ) complex. HJ DNA is sandwiched between 2 RuvA tetramers; dsDNA enters through RuvA and exits via RuvB. An RuvB hexamer assembles on each DNA strand where it exits the tetramer. Each RuvB hexamer is contacted by two RuvA subunits (via domain III) on 2 adjacent RuvB subunits; this complex drives branch migration. In the full resolvosome a probable DNA-RuvA(4)-RuvB(12)-RuvC(2) complex forms which resolves the HJ.

The protein resides in the cytoplasm. It catalyses the reaction ATP + H2O = ADP + phosphate + H(+). Functionally, the RuvA-RuvB-RuvC complex processes Holliday junction (HJ) DNA during genetic recombination and DNA repair, while the RuvA-RuvB complex plays an important role in the rescue of blocked DNA replication forks via replication fork reversal (RFR). RuvA specifically binds to HJ cruciform DNA, conferring on it an open structure. The RuvB hexamer acts as an ATP-dependent pump, pulling dsDNA into and through the RuvAB complex. RuvB forms 2 homohexamers on either side of HJ DNA bound by 1 or 2 RuvA tetramers; 4 subunits per hexamer contact DNA at a time. Coordinated motions by a converter formed by DNA-disengaged RuvB subunits stimulates ATP hydrolysis and nucleotide exchange. Immobilization of the converter enables RuvB to convert the ATP-contained energy into a lever motion, pulling 2 nucleotides of DNA out of the RuvA tetramer per ATP hydrolyzed, thus driving DNA branch migration. The RuvB motors rotate together with the DNA substrate, which together with the progressing nucleotide cycle form the mechanistic basis for DNA recombination by continuous HJ branch migration. Branch migration allows RuvC to scan DNA until it finds its consensus sequence, where it cleaves and resolves cruciform DNA. The protein is Holliday junction branch migration complex subunit RuvB of Polaromonas sp. (strain JS666 / ATCC BAA-500).